The sequence spans 245 residues: tRNA pseudouridine synthase A (245 aa).

Residue Asp52 is the Nucleophile of the active site. Tyr111 is a binding site for substrate.

The protein belongs to the tRNA pseudouridine synthase TruA family. As to quaternary structure, homodimer.

The catalysed reaction is uridine(38/39/40) in tRNA = pseudouridine(38/39/40) in tRNA. Formation of pseudouridine at positions 38, 39 and 40 in the anticodon stem and loop of transfer RNAs. This Wolbachia pipientis wMel protein is tRNA pseudouridine synthase A.